Here is a 621-residue protein sequence, read N- to C-terminus: DNA mismatch repair protein MutL (621 aa).

The protein belongs to the DNA mismatch repair MutL/HexB family.

In terms of biological role, this protein is involved in the repair of mismatches in DNA. It is required for dam-dependent methyl-directed DNA mismatch repair. May act as a 'molecular matchmaker', a protein that promotes the formation of a stable complex between two or more DNA-binding proteins in an ATP-dependent manner without itself being part of a final effector complex. The protein is DNA mismatch repair protein MutL of Petrotoga mobilis (strain DSM 10674 / SJ95).